An 84-amino-acid polypeptide reads, in one-letter code: uncharacterized protein (84 aa).

2 helical membrane passes run 27-47 (INHH…LAML) and 52-72 (IGHV…FVLI).

The protein to M.tuberculosis Rv2876.

The protein localises to the cell membrane. This is an uncharacterized protein from Mycobacterium leprae (strain TN).